A 391-amino-acid chain; its full sequence is Phosphoglycerate kinase (391 aa).

Residues 21–23 (DLN), Arg-36, 59–62 (HLGR), Arg-114, and Arg-147 contribute to the substrate site. ATP-binding positions include Lys-198, Glu-315, and 344-347 (GGDT).

It belongs to the phosphoglycerate kinase family. Monomer.

It is found in the cytoplasm. The catalysed reaction is (2R)-3-phosphoglycerate + ATP = (2R)-3-phospho-glyceroyl phosphate + ADP. The protein operates within carbohydrate degradation; glycolysis; pyruvate from D-glyceraldehyde 3-phosphate: step 2/5. The polypeptide is Phosphoglycerate kinase (Actinobacillus succinogenes (strain ATCC 55618 / DSM 22257 / CCUG 43843 / 130Z)).